Consider the following 247-residue polypeptide: MHQDTVRGKAFAMPLISPAYPAGPYRFRNREYLIITYRTDPQKLRDLVPEPLQVCEPMVKFEFIRMPDSTGFGDYTEGGQVIPVSFYGRRGSYTHCMFLDDHPPIAGGRELWGFPKKLASPTLRTETDTLVGTLDYGPVRVATGTMGYKHRAADLASVRASLAEPNFLLKIIPHVDGTPRICELVEYHLEDVHLRGAWTGPAALNLWSHALAPVAELPVLEVVSAVHLVADLTLALGKVVHDYLAKA.

Lys-116 (schiff-base intermediate with acetoacetate) is an active-site residue.

This sequence belongs to the ADC family.

It catalyses the reaction acetoacetate + H(+) = acetone + CO2. In terms of biological role, catalyzes the conversion of acetoacetate to acetone and carbon dioxide. This chain is Acetoacetate decarboxylase 1, found in Mesorhizobium japonicum (strain LMG 29417 / CECT 9101 / MAFF 303099) (Mesorhizobium loti (strain MAFF 303099)).